The chain runs to 233 residues: Large ribosomal subunit protein uL1 (233 aa).

It belongs to the universal ribosomal protein uL1 family. Part of the 50S ribosomal subunit.

Binds directly to 23S rRNA. The L1 stalk is quite mobile in the ribosome, and is involved in E site tRNA release. In terms of biological role, protein L1 is also a translational repressor protein, it controls the translation of the L11 operon by binding to its mRNA. The polypeptide is Large ribosomal subunit protein uL1 (Shewanella halifaxensis (strain HAW-EB4)).